We begin with the raw amino-acid sequence, 955 residues long: Leucine--tRNA ligase (955 aa).

The 'HIGH' region signature appears at P66–H77. Positions K725–S729 match the 'KMSKS' region motif. ATP is bound at residue K728.

Belongs to the class-I aminoacyl-tRNA synthetase family.

Its subcellular location is the cytoplasm. The enzyme catalyses tRNA(Leu) + L-leucine + ATP = L-leucyl-tRNA(Leu) + AMP + diphosphate. The sequence is that of Leucine--tRNA ligase from Saccharopolyspora erythraea (strain ATCC 11635 / DSM 40517 / JCM 4748 / NBRC 13426 / NCIMB 8594 / NRRL 2338).